The chain runs to 410 residues: Sensor-like histidine kinase SenX3 (410 aa).

2 consecutive transmembrane segments (helical) span residues Ala-6 to Met-26 and Ile-46 to Val-66. Positions Asn-164–Ile-380 constitute a Histidine kinase domain. His-167 is subject to Phosphohistidine; by autocatalysis. A disordered region spans residues Asp-385–Arg-410.

Post-translationally, autophosphorylated.

It localises to the cell membrane. The enzyme catalyses ATP + protein L-histidine = ADP + protein N-phospho-L-histidine.. Member of the two-component regulatory system SenX3/RegX3. Autophosphorylates, and then transfers the phosphate group to RegX3. This chain is Sensor-like histidine kinase SenX3, found in Mycobacterium bovis (strain ATCC BAA-935 / AF2122/97).